Here is a 729-residue protein sequence, read N- to C-terminus: Glycerophosphodiester phosphodiesterase GDPDL5 (729 aa).

Positions 1 to 22 (MACPRVIFLILITFFILQTAFS) are cleaved as a signal peptide. 2 consecutive GP-PDE domains span residues 33–320 (PAVI…YRAI) and 337–645 (ITII…ARYR). Asn88, Asn162, Asn218, Asn227, Asn285, Asn302, Asn390, Asn401, and Asn507 each carry an N-linked (GlcNAc...) asparagine glycan. The helical transmembrane segment at 709–729 (AIEVPFAFIAMAILVCFFISV) threads the bilayer.

This sequence belongs to the glycerophosphoryl diester phosphodiesterase family. In terms of tissue distribution, expressed in stems, flowers and siliques.

The protein localises to the membrane. The catalysed reaction is a sn-glycero-3-phosphodiester + H2O = an alcohol + sn-glycerol 3-phosphate + H(+). The sequence is that of Glycerophosphodiester phosphodiesterase GDPDL5 from Arabidopsis thaliana (Mouse-ear cress).